The following is a 460-amino-acid chain: Argininosuccinate lyase (460 aa).

Belongs to the lyase 1 family. Argininosuccinate lyase subfamily.

It is found in the cytoplasm. It catalyses the reaction 2-(N(omega)-L-arginino)succinate = fumarate + L-arginine. The protein operates within amino-acid biosynthesis; L-arginine biosynthesis; L-arginine from L-ornithine and carbamoyl phosphate: step 3/3. This chain is Argininosuccinate lyase, found in Desulforamulus reducens (strain ATCC BAA-1160 / DSM 100696 / MI-1) (Desulfotomaculum reducens).